Here is a 308-residue protein sequence, read N- to C-terminus: Hydroxyacylglutathione hydrolase, mitochondrial (308 aa).

A mitochondrion-targeting transit peptide spans 1–13 (MVLGRGLLGRRSL). Zn(2+) is bound by residues histidine 102, histidine 104, aspartate 106, and histidine 107. The residue at position 116 (lysine 116) is an N6-acetyllysine. The Zn(2+) site is built by histidine 158 and aspartate 182. Residues 191-193 (KFY) and 221-223 (HEY) each bind substrate. Residue histidine 221 participates in Zn(2+) binding. At lysine 229 the chain carries N6-acetyllysine; alternate. The residue at position 229 (lysine 229) is an N6-succinyllysine; alternate. 297–300 (RKEK) is a binding site for substrate.

Belongs to the metallo-beta-lactamase superfamily. Glyoxalase II family. As to quaternary structure, monomer. Zn(2+) is required as a cofactor. Testis.

It localises to the mitochondrion matrix. The protein localises to the cytoplasm. The catalysed reaction is an S-(2-hydroxyacyl)glutathione + H2O = a 2-hydroxy carboxylate + glutathione + H(+). The enzyme catalyses (R)-S-lactoylglutathione + H2O = (R)-lactate + glutathione + H(+). It participates in secondary metabolite metabolism; methylglyoxal degradation; (R)-lactate from methylglyoxal: step 2/2. Thiolesterase that catalyzes the hydrolysis of S-D-lactoyl-glutathione to form glutathione and D-lactic acid. The protein is Hydroxyacylglutathione hydrolase, mitochondrial (HAGH) of Macaca fascicularis (Crab-eating macaque).